Reading from the N-terminus, the 201-residue chain is Small ribosomal subunit protein uS4c (201 aa).

The disordered stretch occupies residues 20–44 (GLTSKRPKAGSDLRNQSRSGKKSQY). The S4 RNA-binding domain maps to 89–152 (MRLDNILFRL…NSRTLVQNLL (64 aa)).

This sequence belongs to the universal ribosomal protein uS4 family. Part of the 30S ribosomal subunit. Contacts protein S5. The interaction surface between S4 and S5 is involved in control of translational fidelity.

The protein localises to the plastid. It is found in the chloroplast. One of the primary rRNA binding proteins, it binds directly to 16S rRNA where it nucleates assembly of the body of the 30S subunit. Functionally, with S5 and S12 plays an important role in translational accuracy. This is Small ribosomal subunit protein uS4c (rps4) from Barbarea verna (Land cress).